The sequence spans 335 residues: Pregnancy-specific beta-1-glycoprotein 11 (335 aa).

A signal peptide spans 1–34 (MGPLSAPPCTEHIKWKGLLLTALLLNFWNLPTTA). Residues 35–144 (QVMIEAQPPK…TGYFTFTLYL (110 aa)) enclose the Ig-like V-type domain. Residues Asn-61, Asn-104, and Asn-111 are each glycosylated (N-linked (GlcNAc...) asparagine). Residues 127–129 (RGD) carry the Cell attachment site motif. Ig-like C2-type domains follow at residues 147 to 234 (PKPS…VTLN) and 242 to 317 (PRIF…TSLT). 2 disulfide bridges follow: Cys-169–Cys-217 and Cys-261–Cys-301.

The protein belongs to the immunoglobulin superfamily. CEA family.

The protein localises to the secreted. The polypeptide is Pregnancy-specific beta-1-glycoprotein 11 (PSG11) (Homo sapiens (Human)).